The primary structure comprises 141 residues: Hemoglobin subunit alpha-D (141 aa).

A Globin domain is found at methionine 1 to arginine 141. Residues histidine 58 and histidine 87 each coordinate heme b.

Belongs to the globin family. In terms of assembly, heterotetramer of two alpha-D chains and two beta chains. In terms of tissue distribution, red blood cells.

Functionally, involved in oxygen transport from the lung to the various peripheral tissues. This chain is Hemoglobin subunit alpha-D (HBAD), found in Anser indicus (Bar-headed goose).